A 333-amino-acid polypeptide reads, in one-letter code: DNA-directed RNA polymerase subunit alpha (333 aa).

The segment at Met-1–Asn-227 is alpha N-terminal domain (alpha-NTD). Residues Glu-247–Ala-333 form an alpha C-terminal domain (alpha-CTD) region.

The protein belongs to the RNA polymerase alpha chain family. As to quaternary structure, homodimer. The RNAP catalytic core consists of 2 alpha, 1 beta, 1 beta' and 1 omega subunit. When a sigma factor is associated with the core the holoenzyme is formed, which can initiate transcription.

It carries out the reaction RNA(n) + a ribonucleoside 5'-triphosphate = RNA(n+1) + diphosphate. DNA-dependent RNA polymerase catalyzes the transcription of DNA into RNA using the four ribonucleoside triphosphates as substrates. The polypeptide is DNA-directed RNA polymerase subunit alpha (Sulfurovum sp. (strain NBC37-1)).